The chain runs to 899 residues: Pre-mRNA-splicing factor 6 (899 aa).

The disordered stretch occupies residues 1 to 65 (MERPSFLDQE…QSQPKDDEDD (65 aa)). Residues 28-51 (TKEKQVVSNDDKGRRIPKRYRENL) are compositionally biased toward basic and acidic residues. 13 HAT repeats span residues 221 to 253 (EDLQKMRTILKSYRKADPTNPQGWIASARLEEK), 255 to 287 (RKFSVAKKIIENGCQECPRSSDIWLENIRLHES), 289 to 318 (VHYCKTLVATAINFNPTSPLLWFKAIDLES), 319 to 350 (TTVNKYRVVRKALQEIPRDEGLWKLAVSFEAD), 352 to 381 (AQVIKMLEKATQFIPQSMDLLTAYTNLQSY), 383 to 414 (NAKMTLNSFRKILPQEPEIWIISTLLEERNNP), 493 to 525 (PHSKVQIAVLKKLIQWDPCDTVLWSRLKMATES), 545 to 578 (NSDDIRANMREKSPGLLMMYVSEYWKAQKGDTRQ), 608 to 645 (LQLDELRDFFQQTFSSLEDFKISGTERLYYKYVNFLRY), 648 to 680 (LNEEAIKFLNERCLKSFPICHKFFLQLGQIYHS), 682 to 714 (GNIEMSRETYLSGTRLVPNCPLLWVSLSKIDEI), 751 to 783 (GNLDQAELLVTQALQKFPSNALLWVEQIKLFKH), and 819 to 851 (AQYETSLKWLERALKKCSRYGDTWVWLFRTYAR).

As to quaternary structure, component of the U4/U6-U5 tri-snRNP complex composed of the U4, U6 and U5 snRNAs and at least PRP3, PRP4, PRP6, PRP8, PRP18, PRP31, PRP38, SNU13, SNU23, SNU66, SNU114, SPP381, SMB1, SMD1, SMD2, SMD3, SMX2, SMX3, LSM2, LSM3, LSM4, LSM5, LSM6, LSM7, LSM8, BRR2 and DIB1.

It localises to the nucleus. Its function is as follows. Participates in pre-mRNA splicing. Part of the U4/U5/U6 tri-snRNP complex, one of the building blocks of the spliceosome. This Saccharomyces cerevisiae (strain ATCC 204508 / S288c) (Baker's yeast) protein is Pre-mRNA-splicing factor 6 (PRP6).